The chain runs to 182 residues: MAQKERGEREERDNEFVDRLVHINRVAKVVKGGRRFGFAALVVVGDQKGRVGFGHGKAREVPEAVRKATESAKRGMIYVPLRSGRTLHHDLEGRHGAGRVLLRSASAGTGIIAGGPMRAIFEALGMQDVVAKSLGSSNPYNMVRATFDALKHQMHPRDIAAQRGIKYSTLQARRRHLVDVEG.

The S5 DRBM domain maps to 16-79 (FVDRLVHINR…ESAKRGMIYV (64 aa)).

This sequence belongs to the universal ribosomal protein uS5 family. As to quaternary structure, part of the 30S ribosomal subunit. Contacts proteins S4 and S8.

With S4 and S12 plays an important role in translational accuracy. Its function is as follows. Located at the back of the 30S subunit body where it stabilizes the conformation of the head with respect to the body. This is Small ribosomal subunit protein uS5 from Bartonella tribocorum (strain CIP 105476 / IBS 506).